The primary structure comprises 182 residues: Troponin I, fast skeletal muscle (182 aa).

N-acetylglycine is present on Gly2. The interval 2-48 (GDEEKRNRAITARRQHLKSVMLQIAATELEKEESRREAEKQNYLAEH) is involved in binding TNC. The residue at position 12 (Thr12) is a Phosphothreonine. The interval 97–117 (NQKLFDLRGKFKRPPLRRVRM) is involved in binding TNC and actin. Residue Ser118 is modified to Phosphoserine.

Belongs to the troponin I family. As to quaternary structure, binds to actin and tropomyosin.

Troponin I is the inhibitory subunit of troponin, the thin filament regulatory complex which confers calcium-sensitivity to striated muscle actomyosin ATPase activity. The polypeptide is Troponin I, fast skeletal muscle (TNNI2) (Homo sapiens (Human)).